The chain runs to 408 residues: tRNA-specific 2-thiouridylase MnmA (408 aa).

ATP is bound by residues 38–45 (GMSGGVDS) and Met-64. Positions 124 to 126 (NPD) are interaction with target base in tRNA. Cys-129 serves as the catalytic Nucleophile. Cys-129 and Cys-231 are joined by a disulfide. An ATP-binding site is contributed by Gly-153. Positions 181–183 (KDQ) are interaction with tRNA. Cys-231 serves as the catalytic Cysteine persulfide intermediate. Positions 348–349 (RY) are interaction with tRNA.

The protein belongs to the MnmA/TRMU family.

Its subcellular location is the cytoplasm. It carries out the reaction S-sulfanyl-L-cysteinyl-[protein] + uridine(34) in tRNA + AH2 + ATP = 2-thiouridine(34) in tRNA + L-cysteinyl-[protein] + A + AMP + diphosphate + H(+). Functionally, catalyzes the 2-thiolation of uridine at the wobble position (U34) of tRNA, leading to the formation of s(2)U34. The sequence is that of tRNA-specific 2-thiouridylase MnmA from Psychrobacter cryohalolentis (strain ATCC BAA-1226 / DSM 17306 / VKM B-2378 / K5).